Consider the following 161-residue polypeptide: Phosphopantetheine adenylyltransferase (161 aa).

Ser-9 is a binding site for substrate. ATP contacts are provided by residues 9-10 (SF) and His-17. Residues Lys-41, Leu-73, and Arg-87 each coordinate substrate. ATP is bound by residues 88-90 (GIR), Glu-98, and 123-129 (TGFISST).

Belongs to the bacterial CoaD family. In terms of assembly, homohexamer. It depends on Mg(2+) as a cofactor.

It is found in the cytoplasm. The enzyme catalyses (R)-4'-phosphopantetheine + ATP + H(+) = 3'-dephospho-CoA + diphosphate. The protein operates within cofactor biosynthesis; coenzyme A biosynthesis; CoA from (R)-pantothenate: step 4/5. Reversibly transfers an adenylyl group from ATP to 4'-phosphopantetheine, yielding dephospho-CoA (dPCoA) and pyrophosphate. This chain is Phosphopantetheine adenylyltransferase, found in Psychromonas ingrahamii (strain DSM 17664 / CCUG 51855 / 37).